The primary structure comprises 361 residues: MARELFRTPIWRLDKFIEDQLLPDTTFLTELRADIDSISAFLMERCFQGAAHPVRVSRVVMGGCYNEYTVLKGRSEANMVVFLINLTSFEDQFNGQVVFIEEIWRHLLQLQQEKLCKLKFEVQSPKEPNSRFLSFKLSCPERQHELEFDVQPAYDALYEVRHFKPFDSSNYNKVYAQLTHECTTLEKEGEFSICFTDLHQSFLRYRAPKLWNLIRLVKHWYQLCKEKLRGPLPPQYALELLTVYVWEYGIHENPGLHTAQCFRTVLELVTKYKRLRIYWTWCYDFQHEISDYLQGQIKKARPLILDPADPTRNVAGSDLQAWDLLAKEAQIWIDSTFFTNHDMSIVEAWEVMPERQECVFL.

This sequence belongs to the 2-5A synthase family. In terms of assembly, interacts with OAS1A, the interaction inhibits OAS1A catalytic activity. Expressed specifically in oocytes (at protein level). Expressed at highest level in ovary with lesser amounts in intestine, brain, thymus lung, kidney, liver and uterus.

It localises to the cytoplasm. Does not have 2'-5'-oligoadenylate synthetase activity, but can bind double-stranded RNA. May play a role in the control of female fertility, possibly by binding to and inhibiting OAS1A. In Mus musculus (Mouse), this protein is Inactive 2'-5'-oligoadenylate synthase 1D.